A 68-amino-acid chain; its full sequence is MRPRDQGFLVLGFTYSVLLISLATFYWLRNNDSFLHYWCVLLLCPATLWLWALIAWCDSEMFASSKDE.

2 helical membrane passes run 8–28 (FLVL…FYWL) and 34–54 (FLHY…WALI).

As to quaternary structure, component of the phosphatidylinositol N-acetylglucosaminyltransferase (GPI-GlcNAc transferase) complex composed of at least GPI1, GPI2, GPI3, GPI15, GPI19 and ERI1. Interacts with GPI2. Interacts with GTP-bound RAS2 in an effector loop-dependent manner.

The protein localises to the endoplasmic reticulum membrane. Its pathway is glycolipid biosynthesis; glycosylphosphatidylinositol-anchor biosynthesis. Its function is as follows. Probable component of the GPI-GlcNAc transferase (GPI-GnT) complex in the endoplasmic reticulum, a complex that catalyzes transfer of GlcNAc from UDP-GlcNAc to an acceptor phosphatidylinositol, the first step in the production of GPI-anchors for cell surface proteins. Ras may inhibit the enzyme activity of the GPI-GnT complex via the association between ERI1 and RAS2. The sequence is that of Phosphatidylinositol N-acetylglucosaminyltransferase ERI1 subunit (ERI1) from Saccharomyces cerevisiae (strain ATCC 204508 / S288c) (Baker's yeast).